A 182-amino-acid polypeptide reads, in one-letter code: Putative CTD phosphatase-like protein 355R (182 aa).

The FCP1 homology domain occupies M1–H180.

Belongs to the IIV-6 355R family.

Functionally, may function as a phosphatase. This is Putative CTD phosphatase-like protein 355R from Invertebrate iridescent virus 6 (IIV-6).